A 1244-amino-acid chain; its full sequence is Membrane-associated phosphatidylinositol transfer protein 1 (1244 aa).

Phosphothreonine is present on Thr59. Disordered stretches follow at residues 258-331 (KCNT…QSLS) and 339-358 (ARDS…EGFS). Thr287 carries the phosphothreonine; by CDK1 modification. Positions 299–319 (ASPDASFGKQWSSSSRSSYSS) are enriched in low complexity. Residues Ser300, Ser304, Ser319, Ser326, Ser329, Ser342, Ser345, Ser346, and Ser373 each carry the phosphoserine modification. Ser382 carries the phosphoserine; by CDK1 modification. A disordered region spans residues 581 to 682 (AGTGSRGSSR…SSEAPDGPSS (102 aa)). Phosphoserine occurs at positions 593, 600, and 621. The segment covering 643–658 (GSQNSLQAAPATTSSW) has biased composition (polar residues). The DDHD domain maps to 686 to 880 (LDFKVSGFFL…VAFILRQVIE (195 aa)). Phosphoserine is present on Ser896. A disordered region spans residues 1206–1244 (QLLRSRGPSQAEREGPGTPPTTLARGKARSISLKLDSEE). Residues Arg1211 and Arg1218 each carry the omega-N-methylarginine modification. At Ser1237 the chain carries Phosphoserine.

The protein belongs to the PtdIns transfer protein family. PI transfer class IIA subfamily. As to quaternary structure, interacts with PIK4CA. Interacts with PTK2B via its C-terminus. Interacts with RHOA. Has higher affinity for the inactive, GDP-bound form of RHOA. The CDK1-phosphorylated form interacts with PLK1. Interacts with VAPB. Post-translationally, phosphorylated on multiple sites by CDK1 at the onset of mitosis. Phosphorylation facilitates dissociation from the Golgi complex and is required for interaction with PLK1. Phosphorylated on threonine residues upon treatment with oleic acid. In terms of processing, phosphorylated on tyrosine residues by PTK2B. Ubiquitous.

It is found in the cytoplasm. The protein localises to the golgi apparatus. Its subcellular location is the golgi stack membrane. The protein resides in the endoplasmic reticulum membrane. It localises to the lipid droplet. It is found in the cleavage furrow. The protein localises to the midbody. The enzyme catalyses a 1,2-diacyl-sn-glycero-3-phospho-(1D-myo-inositol)(in) = a 1,2-diacyl-sn-glycero-3-phospho-(1D-myo-inositol)(out). Catalyzes the transfer of phosphatidylinositol (PI) between membranes. Binds PI, phosphatidylcholine (PC) and phosphatidic acid (PA) with the binding affinity order of PI &gt; PA &gt; PC. Regulates RHOA activity, and plays a role in cytoskeleton remodeling. Necessary for normal completion of cytokinesis. Plays a role in maintaining normal diacylglycerol levels in the Golgi apparatus. Necessary for maintaining the normal structure of the endoplasmic reticulum and the Golgi apparatus. Required for protein export from the endoplasmic reticulum and the Golgi. Binds calcium ions. This Homo sapiens (Human) protein is Membrane-associated phosphatidylinositol transfer protein 1 (PITPNM1).